The sequence spans 360 residues: 3-dehydroquinate synthase (360 aa).

Residues 71–76, 105–109, 129–130, Lys-142, Lys-151, and 169–172 each bind NAD(+); these read DGEQFK, GVIGD, TT, and FLKT. Zn(2+) contacts are provided by Glu-184, His-247, and His-264.

The protein belongs to the sugar phosphate cyclases superfamily. Dehydroquinate synthase family. The cofactor is NAD(+). It depends on Co(2+) as a cofactor. Zn(2+) is required as a cofactor.

Its subcellular location is the cytoplasm. The catalysed reaction is 7-phospho-2-dehydro-3-deoxy-D-arabino-heptonate = 3-dehydroquinate + phosphate. It participates in metabolic intermediate biosynthesis; chorismate biosynthesis; chorismate from D-erythrose 4-phosphate and phosphoenolpyruvate: step 2/7. In terms of biological role, catalyzes the conversion of 3-deoxy-D-arabino-heptulosonate 7-phosphate (DAHP) to dehydroquinate (DHQ). In Buchnera aphidicola subsp. Schizaphis graminum (strain Sg), this protein is 3-dehydroquinate synthase.